A 910-amino-acid polypeptide reads, in one-letter code: MQEQYQPAAIEPAAQKKWDDARIFNVSEDASKPKYYCLSMFPYPSGKLHMGHVRNYTIGDVLSRFKLLNGFNVMQPMGWDAFGMPAENAAMKNNVAPAAWTYDNIEYMKTQLKSLGFAIDWARETATCKPEYYRWEQWLFTKLFEKGIVYRKNGTVNWDPVDQTVLANEQVIDGRGWRSGALIEKREIPMYYFKITDYAEELLNDLDKLEHWPEQVKTMQRNWIGKSRGMTVRFAVSDDSKQGLEGDYAKFLQVYTTRPDTLMGATYVAVAAEHPLATAAAADKPELQAFIAECKAGSVAEADMATMEKKGVPTGRYVVNPLNGDKLEVWIANYVLWGYGDGAVMAVPAHDERDFEFAAKYSLPKKQVLQRVTIGLSPEQEEAMGFGGGSGCGAGYGDGSGSDSRDLPFMPNKWQAWYGVKDDFMVLINSGELDGMNYQTAFDAVAAKLQAIGAGEPKTQYRLRDWGISRQRYWGCPIPIVHCEQCGDVPVPADQLPVVLPENVVPDGMGSPLAKMPEFYETTCPCCGGAAKRETDTMDTFMESSWYFFRYMSPKFSDGMVDPAAAKYWGAVDQYIGGIEHAILHLLYARFFTKLMRDEGLVNVDEPFERLLTQGMVVCETYYRENDKGGKDWINPADVELTFDDKGRPVSAVLKVDGLPVVISGTEKMSKSKNNGVDPQELINAYGADTARLFMMFAAPPEQSLEWSDSGVEGAHRFLRRLWRTVYEYLKQGEAVNAFAGSQDGLSKELKDLRHKLHSTIAKVSDDYGRRQQFNTAIAAVMELLNQYDKTDTGSEQGRTVAQEVLEAAVRLLWPIVPHICETLWSELNGAKLWEAGWPAVDEAALVKSEIEVMVQVNGKLRGKITVAADASKADLEAAALATEGAVKFMEGKPAKKIIVVPGRLVNIVV.

The 'HIGH' region motif lies at 42-52 (PYPSGKLHMGH). The 'KMSKS' region signature appears at 668 to 672 (KMSKS). An ATP-binding site is contributed by Lys671.

Belongs to the class-I aminoacyl-tRNA synthetase family.

It is found in the cytoplasm. The catalysed reaction is tRNA(Leu) + L-leucine + ATP = L-leucyl-tRNA(Leu) + AMP + diphosphate. The chain is Leucine--tRNA ligase from Neisseria meningitidis serogroup A / serotype 4A (strain DSM 15465 / Z2491).